A 320-amino-acid polypeptide reads, in one-letter code: MVNSPIKPTKLAIVGAGAVGSTLAFAAAERGIAREIALQDIAKERVEAEVLDMQHGSSFFPTVSIEGSDDPEVCRDADMVVITAGARQKPGQSRLDLAGATINIMKSIIPNMLKVAPNAIYMLITNPVDIVTHVAMKLSGLPASRMFGSGTNLDSARLRFLIAQQTGVNVKNVHAYIAGEHGDSEVPLWASATIGGVPMCDWQALPGHEPLDAEARERIHQEVKNAAYKIINGKGATNYAISMSGVDIIEAILKDSNRILPVSSLLSDFHGISDVCMSVPTLLNRNGVNSRINTPVSDRELAALKRSAETLRETAAQFGF.

Residues Val-19, Asp-40, Arg-45, and 85-86 contribute to the NAD(+) site; that span reads GA. 2 residues coordinate substrate: Gln-88 and Arg-94. NAD(+)-binding positions include Ser-107, 124 to 126, and Ser-149; that span reads ITN. A substrate-binding site is contributed by 126–129; that stretch reads NPVD. Residue 154–157 coordinates substrate; it reads DSAR. Beta-D-fructose 1,6-bisphosphate is bound by residues Arg-159 and His-174. Catalysis depends on His-181, which acts as the Proton acceptor. Position 228 is a phosphotyrosine (Tyr-228). Thr-237 lines the substrate pocket.

The protein belongs to the LDH/MDH superfamily. LDH family. In terms of assembly, homotetramer.

The protein resides in the cytoplasm. It catalyses the reaction (S)-lactate + NAD(+) = pyruvate + NADH + H(+). Its pathway is fermentation; pyruvate fermentation to lactate; (S)-lactate from pyruvate: step 1/1. Allosterically activated by fructose 1,6-bisphosphate (FBP). Catalyzes the conversion of lactate to pyruvate. In Bifidobacterium animalis subsp. lactis (strain AD011), this protein is L-lactate dehydrogenase.